The sequence spans 76 residues: Large ribosomal subunit protein bL31 (76 aa).

The protein belongs to the bacterial ribosomal protein bL31 family. Type A subfamily. In terms of assembly, part of the 50S ribosomal subunit.

In terms of biological role, binds the 23S rRNA. This is Large ribosomal subunit protein bL31 from Picosynechococcus sp. (strain ATCC 27264 / PCC 7002 / PR-6) (Agmenellum quadruplicatum).